We begin with the raw amino-acid sequence, 99 residues long: Large ribosomal subunit protein uL23 (99 aa).

It belongs to the universal ribosomal protein uL23 family. As to quaternary structure, part of the 50S ribosomal subunit. Contacts protein L29, and trigger factor when it is bound to the ribosome.

Its function is as follows. One of the early assembly proteins it binds 23S rRNA. One of the proteins that surrounds the polypeptide exit tunnel on the outside of the ribosome. Forms the main docking site for trigger factor binding to the ribosome. This Xanthomonas campestris pv. campestris (strain B100) protein is Large ribosomal subunit protein uL23.